Consider the following 314-residue polypeptide: Ribonuclease Z (314 aa).

Positions 61, 63, 65, 66, 139, 211, and 269 each coordinate Zn(2+). Asp65 acts as the Proton acceptor in catalysis.

It belongs to the RNase Z family. In terms of assembly, homodimer. It depends on Zn(2+) as a cofactor.

The catalysed reaction is Endonucleolytic cleavage of RNA, removing extra 3' nucleotides from tRNA precursor, generating 3' termini of tRNAs. A 3'-hydroxy group is left at the tRNA terminus and a 5'-phosphoryl group is left at the trailer molecule.. Its function is as follows. Zinc phosphodiesterase, which displays some tRNA 3'-processing endonuclease activity. Probably involved in tRNA maturation, by removing a 3'-trailer from precursor tRNA. In Gemmatimonas aurantiaca (strain DSM 14586 / JCM 11422 / NBRC 100505 / T-27), this protein is Ribonuclease Z.